Reading from the N-terminus, the 254-residue chain is Acetylglutamate kinase (254 aa).

Substrate-binding positions include Gly40–Gly41, Arg62, and Asn158.

Belongs to the acetylglutamate kinase family. ArgB subfamily.

It localises to the cytoplasm. The catalysed reaction is N-acetyl-L-glutamate + ATP = N-acetyl-L-glutamyl 5-phosphate + ADP. The protein operates within amino-acid biosynthesis; L-arginine biosynthesis; N(2)-acetyl-L-ornithine from L-glutamate: step 2/4. In terms of biological role, catalyzes the ATP-dependent phosphorylation of N-acetyl-L-glutamate. The chain is Acetylglutamate kinase from Chloroflexus aurantiacus (strain ATCC 29366 / DSM 635 / J-10-fl).